The following is a 456-amino-acid chain: Hydroxyproline dehydrogenase (456 aa).

N6-acetyllysine occurs at positions 310 and 320.

It belongs to the proline oxidase family. The cofactor is FAD.

It catalyses the reaction trans-4-hydroxy-L-proline + a quinone = (3R,5S)-1-pyrroline-3-hydroxy-5-carboxylate + a quinol + H(+). The enzyme catalyses L-proline + a quinone = (S)-1-pyrroline-5-carboxylate + a quinol + H(+). Dehydrogenase that converts trans-4-L-hydroxyproline to delta-1-pyrroline-3-hydroxy-5-carboxylate (Hyp) using ubiquinone-10 as the terminal electron acceptor. Can also use proline as a substrate but with a very much lower efficiency. Does not react with other diastereomers of Hyp: trans-4-D-hydroxyproline and cis-4-L-hydroxyproline. Ubiquininone analogs such as menadione, duroquinone and ubiquinone-1 react more efficiently than oxygen as the terminal electron acceptor during catalysis. The sequence is that of Hydroxyproline dehydrogenase from Rattus norvegicus (Rat).